Reading from the N-terminus, the 242-residue chain is MAKRGKRYQQLLSLIEKGKLYSPKEAVSLVKKLATAKFDETINLAVRLGVDPRHADQQVRGTVVLPYGTGKEKKVLVFAEGEKAQEAREAGADYVGGEDLVKQIESGWLDFDVAIATPDIMGTLKIPSRLGKILGPRGLMPNPKTGTVTNDIAKAVKEYKAGRVEFRTDRYGIVHVPIGKASFSEEALYKNLMTVLGTLLRLKPAAAKGQYFKSIYISPSMGPSVPIDTKNIADLIKQEEAA.

It belongs to the universal ribosomal protein uL1 family. In terms of assembly, part of the 50S ribosomal subunit.

Binds directly to 23S rRNA. The L1 stalk is quite mobile in the ribosome, and is involved in E site tRNA release. Functionally, protein L1 is also a translational repressor protein, it controls the translation of the L11 operon by binding to its mRNA. This is Large ribosomal subunit protein uL1 from Dictyoglomus thermophilum (strain ATCC 35947 / DSM 3960 / H-6-12).